The sequence spans 632 residues: Probable potassium transport system protein Kup 1 (632 aa).

12 helical membrane-spanning segments follow: residues 17–37, 60–80, 106–126, 144–164, 175–195, 210–230, 254–274, 292–312, 344–364, 370–390, 401–421, and 426–446; these read LFYLALGSVGVVYGDIGTSPL, LISLMIWALTIIVTIKYVLFL, TALLMLLGLMGAALFLGDAMI, PSLAEYIVPISVVILALLFVV, FFGPITAVWFLVMAAAGISHI, AVSFLLHEGFYGVVVLGAVFL, WFLLVFPALTLNYLGQGALVL, ALLPVVILATAATIIASQAVI, IFLPSVNAVLFFGVIFLVLSF, LATAYGISVTGAMVVTSIMAF, LPVAVIALAPLVVLEMIFLGA, and IHDGGYIPILIATAFTVVMWT.

It belongs to the HAK/KUP transporter (TC 2.A.72) family.

It localises to the cell inner membrane. It carries out the reaction K(+)(in) + H(+)(in) = K(+)(out) + H(+)(out). Its function is as follows. Transport of potassium into the cell. Likely operates as a K(+):H(+) symporter. The protein is Probable potassium transport system protein Kup 1 of Rhizobium etli (strain ATCC 51251 / DSM 11541 / JCM 21823 / NBRC 15573 / CFN 42).